The primary structure comprises 353 residues: S-adenosylmethionine decarboxylase proenzyme (353 aa).

Active-site residues include Glu-9 and Glu-12. The Schiff-base intermediate with substrate; via pyruvic acid role is filled by Ser-69. The residue at position 69 (Ser-69) is a Pyruvic acid (Ser); by autocatalysis. Cys-83 acts as the Proton donor; for catalytic activity in catalysis. Catalysis depends on proton acceptor; for processing activity residues Ser-232 and His-245.

Belongs to the eukaryotic AdoMetDC family. Requires pyruvate as cofactor. Is synthesized initially as an inactive proenzyme. Formation of the active enzyme involves a self-maturation process in which the active site pyruvoyl group is generated from an internal serine residue via an autocatalytic post-translational modification. Two non-identical subunits are generated from the proenzyme in this reaction, and the pyruvate is formed at the N-terminus of the alpha chain, which is derived from the carboxyl end of the proenzyme. The post-translation cleavage follows an unusual pathway, termed non-hydrolytic serinolysis, in which the side chain hydroxyl group of the serine supplies its oxygen atom to form the C-terminus of the beta chain, while the remainder of the serine residue undergoes an oxidative deamination to produce ammonia and the pyruvoyl group blocking the N-terminus of the alpha chain.

It carries out the reaction S-adenosyl-L-methionine + H(+) = S-adenosyl 3-(methylsulfanyl)propylamine + CO2. It functions in the pathway amine and polyamine biosynthesis; S-adenosylmethioninamine biosynthesis; S-adenosylmethioninamine from S-adenosyl-L-methionine: step 1/1. The sequence is that of S-adenosylmethionine decarboxylase proenzyme (SAMDC) from Pisum sativum (Garden pea).